Consider the following 216-residue polypeptide: Sperm microtubule inner protein 8 (216 aa).

Microtubule inner protein component of sperm flagellar doublet microtubules. In terms of tissue distribution, expressed in testis, prostate and placenta.

The protein localises to the cytoplasm. Its subcellular location is the cytoskeleton. It is found in the flagellum axoneme. Microtubule inner protein (MIP) part of the dynein-decorated doublet microtubules (DMTs) in flagellum axoneme. May serve to reinforce and thus stabilize the microtubule structure in the sperm flagella. In Homo sapiens (Human), this protein is Sperm microtubule inner protein 8.